The chain runs to 272 residues: Ribonuclease HII (272 aa).

Positions 87–272 (KYVAGVDEVG…HRMSFLKNIL (186 aa)) constitute an RNase H type-2 domain. A divalent metal cation-binding residues include D93, E94, and D188.

This sequence belongs to the RNase HII family. Requires Mn(2+) as cofactor. Mg(2+) is required as a cofactor.

It is found in the cytoplasm. It carries out the reaction Endonucleolytic cleavage to 5'-phosphomonoester.. Its function is as follows. Endonuclease that specifically degrades the RNA of RNA-DNA hybrids. In Clostridium perfringens (strain ATCC 13124 / DSM 756 / JCM 1290 / NCIMB 6125 / NCTC 8237 / Type A), this protein is Ribonuclease HII.